The primary structure comprises 208 residues: Ribosomal RNA large subunit methyltransferase E (208 aa).

Gly-63, Trp-65, Asp-83, Asp-99, and Asp-124 together coordinate S-adenosyl-L-methionine. Lys-164 (proton acceptor) is an active-site residue.

It belongs to the class I-like SAM-binding methyltransferase superfamily. RNA methyltransferase RlmE family.

It localises to the cytoplasm. It catalyses the reaction uridine(2552) in 23S rRNA + S-adenosyl-L-methionine = 2'-O-methyluridine(2552) in 23S rRNA + S-adenosyl-L-homocysteine + H(+). In terms of biological role, specifically methylates the uridine in position 2552 of 23S rRNA at the 2'-O position of the ribose in the fully assembled 50S ribosomal subunit. This Salmonella agona (strain SL483) protein is Ribosomal RNA large subunit methyltransferase E.